The chain runs to 140 residues: ATP synthase epsilon chain (140 aa).

The protein belongs to the ATPase epsilon chain family. F-type ATPases have 2 components, CF(1) - the catalytic core - and CF(0) - the membrane proton channel. CF(1) has five subunits: alpha(3), beta(3), gamma(1), delta(1), epsilon(1). CF(0) has three main subunits: a, b and c.

It localises to the cell inner membrane. Produces ATP from ADP in the presence of a proton gradient across the membrane. The protein is ATP synthase epsilon chain of Thermodesulfovibrio yellowstonii (strain ATCC 51303 / DSM 11347 / YP87).